Reading from the N-terminus, the 148-residue chain is MIKIKLTHPDCMPKIGSEDAAGMDLRAFFGTNPAADLRAIAPGKSLMIDTGVAVEIPRGWFGLVVPRSSLGKRHLMIANTAGVIDSDYRGTIKMNLYNYGSEMQTLENFERLCQLVVLPHYSTHNFKIVDELEETIRGEGGFGSSGSK.

It belongs to the dUTPase family. Mg(2+) serves as cofactor.

It carries out the reaction dUTP + H2O = dUMP + diphosphate + H(+). Its pathway is pyrimidine metabolism; dUMP biosynthesis; dUMP from dCTP (dUTP route): step 2/2. Functionally, this enzyme decreases the intracellular concentration of dUTP so that uracil cannot be incorporated into viral progeny DNA. This activity is sufficient to exclude uracil from the DNA during phage replication. In the case of dUTPase mutant phages, the host dUTPase activity is not sufficient to exclude uracil from T5 DNA and uracil are incorporated, leading to decreased phage viability. The sequence is that of Deoxyuridine 5'-triphosphate nucleotidohydrolase (DUT) from Escherichia coli (Enterobacteria phage T5).